A 126-amino-acid chain; its full sequence is Large ribosomal subunit protein eL14 (126 aa).

It belongs to the eukaryotic ribosomal protein eL14 family.

This chain is Large ribosomal subunit protein eL14 (RPL14), found in Tetrahymena thermophila (strain SB210).